Here is a 1158-residue protein sequence, read N- to C-terminus: MPVRRGHVAPQNTFLDTIIRKFEGQSRKFIIANARVENCAVIYCNDGFCELCGYSRAEVMQRPCTCDFLHGPRTQRRAAAQIAQALLGAEERKVEIAFYRKDGSCFLCLVDVVPVKNEDGAVIMFILNFEVVMEKDMVGSPTHDTNHRGPPTSWLAPGRAKTFRLKLPALLALTTRESSARPGGVGSAGAPGAVVVDVDLSPAVPSRESLALDEVTAMDNHVAGLGPMEEQRALVGSSSPPAGAPEPLPSPRAHSLNPDASGSSCSLARTRSRESCASVRRASSADDIEAMRAGLPPPPRHASTGAMHPLRGGLLNSTSDSDLVRYRTISKIPQITLNFVDLKGDPFLASPTSDREIIAPKIKERTHNVTEKVTQVLSLGADVLPEYKLQAPRIHRWTILHYSPFKAVWDWLILLLVIYTAVFTPYSAAFLLKETEEGPPAPDCGYACQPLAVVDFIVDIMFIVDILINFRTTYVNANEEVVSHPGRIAVHYFKGWFLIDMVAAIPFDLLIFGSGSEELIGLLKTARLLRLVRVARKLDRYSEYGAAVLFLLMCTFALIAHWLACIWYAIGNMEQPHMDSRIGWLHNLGDQIGKPYNSSGLGGPSIKDKYVTALYFTFSSLTSVGFGNVSPNTNSEKIFSICVMLIGSLMYASIFGNVSAIIQRLYSGTARYHTQMLRVREFIRFHQIPNPLRQRLEEYFQHAWSYTNGIDMNAVLKGFPECLQADICLHLNRSLLQHCKPFRGATKGCLRALAMKFKTTHAPPGDTLVHAGDLLTALYFISRGSIEILRGDVVVAILGKNDIFGEPLNLYARPGKSNGDVRALTYCDLHKIHRDDLLEVLDMYPEFSDHFWSSLEITFNLRDTNMIPGSPGSAELEGGFNRQRKRKLSFRRRTDRDPEQPGEVSALGPGRAGAGPSGRGRPGGPWGESPSSGPSSPESSEDEGPGRSSSPLRLVPFSSPRPPGEPPGGEPLTEDGEKSSDTCNPLSGAFSGVSNIFSFWGDSRGHQYQELPRCPAPTPSLLNIPLSSPCRRPRGDVEGRLDALQRQLNRLETRLSADMATVLQLLQRQMTLIPPAYSAVTTPGPGPTSTSSLLPVSPIPTLTLDSLSQVSQFMAFEELPPGAPELPQDGPPRRLSLPGQLGALTSQPLHRHGSDPGS.

The Cytoplasmic portion of the chain corresponds to 1-402; that stretch reads MPVRRGHVAP…RIHRWTILHY (402 aa). Residues 17-88 enclose the PAS domain; the sequence is TIIRKFEGQS…AAQIAQALLG (72 aa). One can recognise a PAC domain in the interval 92 to 144; that stretch reads RKVEIAFYRKDGSCFLCLVDVVPVKNEDGAVIMFILNFEVVMEKDMVGSPTHD. Positions 232-314 are disordered; the sequence is RALVGSSSPP…GAMHPLRGGL (83 aa). Residue serine 239 is modified to Phosphoserine. Positions 258–269 are enriched in polar residues; that stretch reads PDASGSSCSLAR. 4 positions are modified to phosphoserine: serine 283, serine 284, serine 319, and serine 350. A helical membrane pass occupies residues 403-423; sequence SPFKAVWDWLILLLVIYTAVF. The Extracellular portion of the chain corresponds to 424–449; that stretch reads TPYSAAFLLKETEEGPPAPDCGYACQ. The helical transmembrane segment at 450 to 470 threads the bilayer; it reads PLAVVDFIVDIMFIVDILINF. The Cytoplasmic segment spans residues 471-494; it reads RTTYVNANEEVVSHPGRIAVHYFK. A helical transmembrane segment spans residues 495–515; it reads GWFLIDMVAAIPFDLLIFGSG. Residues 516–519 are Extracellular-facing; the sequence is SEEL. The chain crosses the membrane as a helical; Voltage-sensor span at residues 520–540; it reads IGLLKTARLLRLVRVARKLDR. Residues 541-546 are Cytoplasmic-facing; that stretch reads YSEYGA. Residues 547–567 traverse the membrane as a helical segment; the sequence is AVLFLLMCTFALIAHWLACIW. At 568 to 610 the chain is on the extracellular side; that stretch reads YAIGNMEQPHMDSRIGWLHNLGDQIGKPYNSSGLGGPSIKDKY. N-linked (GlcNAc...) asparagine glycosylation is present at asparagine 597. An intramembrane region (pore-forming) is located at residues 611–631; sequence VTALYFTFSSLTSVGFGNVSP. The short motif at 623 to 628 is the Selectivity filter element; sequence SVGFGN. At 632–637 the chain is on the extracellular side; that stretch reads NTNSEK. Residues 638-658 form a helical membrane-spanning segment; sequence IFSICVMLIGSLMYASIFGNV. Residues 659 to 1158 are Cytoplasmic-facing; sequence SAIIQRLYSG…LHRHGSDPGS (500 aa). Residues 741–841 are cNMP-binding domain; sequence PFRGATKGCL…IHRDDLLEVL (101 aa). A disordered region spans residues 869–987; the sequence is GSPGSAELEG…KSSDTCNPLS (119 aa). Phosphoserine is present on residues serine 870 and serine 873. The segment covering 882-891 has biased composition (basic residues); it reads RQRKRKLSFR. A compositionally biased stretch (gly residues) spans 910–926; it reads GRAGAGPSGRGRPGGPW. Over residues 927 to 938 the composition is skewed to low complexity; it reads GESPSSGPSSPE. Residues 959–969 show a composition bias toward pro residues; that stretch reads SPRPPGEPPGG. Omega-N-methylarginine is present on arginine 1013. Residues 1034–1061 adopt a coiled-coil conformation; that stretch reads RGDVEGRLDALQRQLNRLETRLSADMAT. The disordered stretch occupies residues 1116–1158; it reads FEELPPGAPELPQDGPPRRLSLPGQLGALTSQPLHRHGSDPGS. Serine 1136 carries the post-translational modification Phosphoserine.

It belongs to the potassium channel family. H (Eag) (TC 1.A.1.20) subfamily. Kv11.1/KCNH2 sub-subfamily. The potassium channel is probably composed of a homo- or heterotetrameric complex of pore-forming alpha subunits that can associate with modulating beta subunits. Interacts with DNAJB12 and DNAJB14; chaperones DNAJB12 and DNAJB14 promote tetramerization. Heteromultimer with KCNH6/ERG2 and KCNH7/ERG3. Interacts with ALG10B. Forms a stable complex with KCNE1 or KCNE2, and that this heteromultimerization regulates Inward rectifier potassium channel activity. Interacts with CANX. The core-glycosylated, but not the fully glycosylated form interacts with RNF207. Interacts with NDFIP1 and NDFIP2; this interaction decreases the cell membrane expression by targeting KCNH2, through interaction with NEDD4L, for the degradation through the multivesicular bodies (MVBs)-lysosomal pathway. Post-translationally, phosphorylated on serine and threonine residues. Phosphorylation by PKA inhibits ion conduction. In terms of tissue distribution, highly expressed in left and right atria of the heart, in cortex and hippocampus; detected at intermediate levels in left and right ventricle, Purkinje fibers, cerebellum, thalamus and basal ganglia; detected at low levels in liver, spleen and kidney.

The protein resides in the cell membrane. The catalysed reaction is K(+)(in) = K(+)(out). In terms of biological role, pore-forming (alpha) subunit of voltage-gated inwardly rectifying potassium channel. Characterized by unusual gating kinetics by producing relatively small outward currents during membrane depolarization and large inward currents during subsequent repolarization which reflect a rapid inactivation during depolarization and quick recovery from inactivation but slow deactivation (closing) during repolarization. Channel properties are modulated by cAMP and subunit assembly. Forms a stable complex with KCNE1 or KCNE2, and that this heteromultimerization regulates inward rectifier potassium channel activity. The polypeptide is Voltage-gated inwardly rectifying potassium channel KCNH2 (Canis lupus familiaris (Dog)).